We begin with the raw amino-acid sequence, 1489 residues long: Sex-determining transformer protein 2 (1489 aa).

The first 33 residues, 1 to 33, serve as a signal peptide directing secretion; that stretch reads MKLAFNKLLVASVVFTVLSFGLLLASLFTTTAT. Transmembrane regions (helical) follow at residues 454–474, 489–509, 513–533, 600–620, 622–642, 749–769, 931–951, 958–978, 986–1006, 1041–1061, and 1066–1086; these read MIYF…AFAF, GFIT…ILID, LCYI…VTFI, YWFL…FFID, DVQK…FEEM, AVVV…LLFI, IFAA…FSIG, LAFA…VSLF, YTNV…CDLA, VQIF…TAII, and AFFI…FNSL. Positions 1138 to 1288 are interaction with fem-3; the sequence is EFSIRPTENT…EQQEVTDDVA (151 aa). 3 disordered regions span residues 1143 to 1176, 1233 to 1393, and 1412 to 1489; these read PTEN…DPSM, LLRQ…YPPS, and RNLP…TPGL. 3 stretches are compositionally biased toward basic and acidic residues: residues 1275 to 1298, 1326 to 1340, and 1423 to 1433; these read DPAK…EVRK, VSRE…REPR, and RPRDWDQRRLV. The tract at residues 1402 to 1423 is MX regulatory domain; required for tra-1 binding; sequence CEDVYWKYNERNLPDNVPMPPR. Positions 1444-1456 are enriched in pro residues; the sequence is VPPPGRSAIPIPP. The segment covering 1460–1482 has biased composition (basic and acidic residues); it reads RLRERRREQHLREQEARRNRPES.

As to quaternary structure, interacts with tra-1 and fem-3.

The protein localises to the membrane. Plays a major role in controlling sexual cell fates. Promotes female development in XX animals where it sequesters one or more of the FEM proteins to the membrane thereby freeing the tra-1 protein (a putative transcription factor) to enter the nucleus and promote female development. In XO animals it acts as a receptor for her-1 which prevents it from binding to FEM proteins thereby repressing the activity of tra-1. Negatively regulates male development when bound to fem-3 and is required together with tra-1 for promoting spermatogenesis. Also required for feminizing tra-3 activity. This is Sex-determining transformer protein 2 from Caenorhabditis briggsae.